The chain runs to 336 residues: Acetyl-coenzyme A carboxylase carboxyl transferase subunit alpha (336 aa).

Residues 48–308 (ALEAKVESLR…KSMLIEELQG (261 aa)) form the CoA carboxyltransferase C-terminal domain.

It belongs to the AccA family. In terms of assembly, acetyl-CoA carboxylase is a heterohexamer composed of biotin carboxyl carrier protein (AccB), biotin carboxylase (AccC) and two subunits each of ACCase subunit alpha (AccA) and ACCase subunit beta (AccD).

Its subcellular location is the cytoplasm. The catalysed reaction is N(6)-carboxybiotinyl-L-lysyl-[protein] + acetyl-CoA = N(6)-biotinyl-L-lysyl-[protein] + malonyl-CoA. The protein operates within lipid metabolism; malonyl-CoA biosynthesis; malonyl-CoA from acetyl-CoA: step 1/1. Its function is as follows. Component of the acetyl coenzyme A carboxylase (ACC) complex. First, biotin carboxylase catalyzes the carboxylation of biotin on its carrier protein (BCCP) and then the CO(2) group is transferred by the carboxyltransferase to acetyl-CoA to form malonyl-CoA. This Chlorobaculum parvum (strain DSM 263 / NCIMB 8327) (Chlorobium vibrioforme subsp. thiosulfatophilum) protein is Acetyl-coenzyme A carboxylase carboxyl transferase subunit alpha.